An 850-amino-acid polypeptide reads, in one-letter code: Probable beta-glucosidase J (850 aa).

N-linked (GlcNAc...) asparagine glycans are attached at residues Asn43 and Asn52. Asp254 is a catalytic residue. The PA14 domain maps to 423 to 583 (TGERGYTFRV…DAETAIKQAV (161 aa)). Asn508 carries N-linked (GlcNAc...) asparagine glycosylation.

It belongs to the glycosyl hydrolase 3 family.

The protein localises to the secreted. It carries out the reaction Hydrolysis of terminal, non-reducing beta-D-glucosyl residues with release of beta-D-glucose.. It participates in glycan metabolism; cellulose degradation. Beta-glucosidases are one of a number of cellulolytic enzymes involved in the degradation of cellulosic biomass. Catalyzes the last step releasing glucose from the inhibitory cellobiose. This chain is Probable beta-glucosidase J (bglJ), found in Emericella nidulans (strain FGSC A4 / ATCC 38163 / CBS 112.46 / NRRL 194 / M139) (Aspergillus nidulans).